Reading from the N-terminus, the 325-residue chain is Elongation factor P--(R)-beta-lysine ligase (325 aa).

76–78 (SPE) contacts substrate. ATP contacts are provided by residues 100-102 (RNE) and Asn109. Tyr118 provides a ligand contact to substrate. 244–245 (EL) contributes to the ATP binding site. Glu251 provides a ligand contact to substrate. Gly300 is a binding site for ATP.

It belongs to the class-II aminoacyl-tRNA synthetase family. EpmA subfamily. As to quaternary structure, homodimer.

It catalyses the reaction D-beta-lysine + L-lysyl-[protein] + ATP = N(6)-((3R)-3,6-diaminohexanoyl)-L-lysyl-[protein] + AMP + diphosphate + H(+). In terms of biological role, with EpmB is involved in the beta-lysylation step of the post-translational modification of translation elongation factor P (EF-P). Catalyzes the ATP-dependent activation of (R)-beta-lysine produced by EpmB, forming a lysyl-adenylate, from which the beta-lysyl moiety is then transferred to the epsilon-amino group of a conserved specific lysine residue in EF-P. The chain is Elongation factor P--(R)-beta-lysine ligase from Klebsiella pneumoniae (strain 342).